Here is a 258-residue protein sequence, read N- to C-terminus: uncharacterized protein (258 aa).

Residues N60, N104, and N113 are each glycosylated (N-linked (GlcNAc...) asparagine; by host). Low complexity predominate over residues 147 to 156; the sequence is TTRKPGQKTT. Residues 147–183 form a disordered region; that stretch reads TTRKPGQKTTLSRLKTTPNKHTQHKRSTRRTSPRDYN. Residues 157 to 166 are compositionally biased toward polar residues; sequence LSRLKTTPNK. Basic residues predominate over residues 167–177; sequence HTQHKRSTRRT. N-linked (GlcNAc...) asparagine; by host glycosylation occurs at N183. A helical transmembrane segment spans residues 208-228; it reads AHSAWILIVIIIIIVVILFFF.

It belongs to the RL11 family.

It is found in the membrane. This is an uncharacterized protein from Human cytomegalovirus (strain AD169) (HHV-5).